Reading from the N-terminus, the 103-residue chain is Small ribosomal subunit protein uS10 (103 aa).

It belongs to the universal ribosomal protein uS10 family. As to quaternary structure, part of the 30S ribosomal subunit.

In terms of biological role, involved in the binding of tRNA to the ribosomes. The sequence is that of Small ribosomal subunit protein uS10 from Pelodictyon phaeoclathratiforme (strain DSM 5477 / BU-1).